The primary structure comprises 200 residues: Ribosome maturation factor RimM (200 aa).

The region spanning 103 to 181 (KEGEYYFYQL…KIVAKRLEYL (79 aa)) is the PRC barrel domain.

This sequence belongs to the RimM family. In terms of assembly, binds ribosomal protein uS19.

It is found in the cytoplasm. Its function is as follows. An accessory protein needed during the final step in the assembly of 30S ribosomal subunit, possibly for assembly of the head region. Essential for efficient processing of 16S rRNA. May be needed both before and after RbfA during the maturation of 16S rRNA. It has affinity for free ribosomal 30S subunits but not for 70S ribosomes. This chain is Ribosome maturation factor RimM, found in Kosmotoga olearia (strain ATCC BAA-1733 / DSM 21960 / TBF 19.5.1).